Consider the following 548-residue polypeptide: SH2/SH3 adapter protein dreadlocks (548 aa).

Disordered regions lie at residues 12 to 37 (IPDS…QHQN), 57 to 92 (QVPV…TASS), and 113 to 146 (GSGS…MKHG). Low complexity predominate over residues 20–37 (QQYPQQQQHPPQLPQHQN). A compositionally biased stretch (gly residues) spans 113-122 (GSGSANGSGS). Residues 123-135 (GNSSSGSAAGNAG) are compositionally biased toward low complexity. In terms of domain architecture, SH3 1 spans 150–209 (DDVCYVVAKYDYAAQGAQELDLRKNERYLLLDDSKHWWRVQNSRNQSGYVPSNYVKKEKP). The disordered stretch occupies residues 219 to 247 (VKKGSGSKTLPNCSPSRQVESPTMSRRLP). Over residues 227–242 (TLPNCSPSRQVESPTM) the composition is skewed to polar residues. SH3 domains lie at 252–311 (EAIG…EDCD) and 324–386 (NVLD…ELND). A disordered region spans residues 398–442 (SAGNGNGGGSNGGAGGGGGNDSMERRNEGNKPAAQSSGQPIERPN). Residues 401-417 (NGNGGGSNGGAGGGGGN) are compositionally biased toward gly residues. The region spanning 448–542 (WYYGAITRSQ…GEKLYLVRSL (95 aa)) is the SH2 domain.

As to quaternary structure, interacts (via SH2 and SH3 domains) with Dscam1 (via cytoplasmic domain); the interaction is direct and requires Dscam1 to be phosphorylated. Interacts (via SH2 and SH3 domains) with InR/Insulin-like receptor (via C-terminal cytoplasmic region); the interaction requires InR kinase activity, probably for autophosphorylation stimulated by insulin signaling. Interacts with Ptp61F (via C-terminus); this interaction is independent of insulin stimulation. Interacts (via SH3 domain 2) with Pak (via N-terminal PXXP motif). Post-translationally, phosphorylated by Src42A and possibly by other tyrosine kinases. Constitutively dephosphorylated by its binding partner Ptp61F.

It is found in the perikaryon. The protein resides in the cell projection. Its subcellular location is the axon. It localises to the growth cone. In terms of biological role, adapter protein that links cell surface receptor tyrosine phosphorylation to downstream signaling pathways and effectors, many of which are involved in regulation of the actin cytoskeleton. Recruited by Dscam1/Down syndrome cell adhesion molecule homolog and InR/insulin-like receptor. Recruits Pak to membranes, probably when dock/dreadlocks is associated with activated receptors. Required for guidance and targeting of photoreceptor (R cell) axon projections but not for axon outgrowth, differentiation or target induction in the developing eye. As part of a signaling pathway that involves the lbm/late bloomer protein, involved in synapse formation of the RP3 motorneuron at the muscle 7/6 cleft, probably by stimulating axon defasciculation from other SNb neurons. This is SH2/SH3 adapter protein dreadlocks from Drosophila melanogaster (Fruit fly).